We begin with the raw amino-acid sequence, 218 residues long: MTDSRIDFRQAKFLISAPDIAHLDEHLPGDVGVEIAFAGRSNAGKSSALNQLTEQKNLARTSKTPGRTQLINVFALDEHRRLVDLPGYGFAQVPLAMKKKWQQALGQYLQERACLSGLVVLMDIRHPLKDLDMQMIEWAVDCDIPVLALLTKCDKLAQSARMKTVNDVRKALADFGDGVKVEPFSSLKGTGKPKVLGILNEWCHPDWLVEALADAEQE.

Positions 31–205 (VGVEIAFAGR…LGILNEWCHP (175 aa)) constitute an EngB-type G domain. GTP contacts are provided by residues 39–46 (GRSNAGKS), 66–70 (GRTQL), 84–87 (DLPG), 151–154 (TKCD), and 184–186 (FSS). Mg(2+) is bound by residues serine 46 and threonine 68.

This sequence belongs to the TRAFAC class TrmE-Era-EngA-EngB-Septin-like GTPase superfamily. EngB GTPase family. Requires Mg(2+) as cofactor.

In terms of biological role, necessary for normal cell division and for the maintenance of normal septation. In Shewanella loihica (strain ATCC BAA-1088 / PV-4), this protein is Probable GTP-binding protein EngB.